A 1597-amino-acid chain; its full sequence is Mitogen-activated protein kinase kinase kinase 4 (1597 aa).

Disordered regions lie at residues 1–128 (MRDA…VETV) and 424–465 (SPRP…PRVP). Over residues 59-69 (SDPEDFSDETN) the composition is skewed to acidic residues. The residue at position 77 (Ser-77) is a Phosphoserine. A compositionally biased stretch (basic residues) spans 84–94 (QMKRLSAKHQR). Ser-424 is modified (phosphoserine). Residue Thr-440 is modified to Phosphothreonine. Ser-449 is subject to Phosphoserine. Residues 449 to 458 (SGTEESDEEP) are compositionally biased toward acidic residues. The residue at position 451 (Thr-451) is a Phosphothreonine. Phosphoserine occurs at positions 454 and 492. 3 disordered regions span residues 1137–1157 (RPVK…IIPT), 1190–1220 (AAGR…SVPE), and 1233–1263 (FRSL…TRRS). Positions 1210-1219 (APDTRGSSVP) are enriched in polar residues. Ser-1241 and Ser-1263 each carry phosphoserine. A compositionally biased stretch (basic and acidic residues) spans 1241–1250 (SPTEERDEPA). Positions 1332-1590 (WQRGNKIGEG…ASQLLDHAFV (259 aa)) constitute a Protein kinase domain. ATP is bound by residues 1338–1346 (IGEGQYGKV) and Lys-1361. The active-site Proton acceptor is the Asp-1452.

The protein belongs to the protein kinase superfamily. STE Ser/Thr protein kinase family. MAP kinase kinase kinase subfamily. Monomer and homodimer. Homodimerization enhances kinase activity. Interacts with CDC42. Interacts with TRAF4; this promotes homodimerization. Binds both upstream activators and downstream substrates in multimolecular complexes. Interacts with AXIN1 and DIXDC1; interaction with DIXDC1 prevents interaction with AXIN1. Interacts with GADD45 and MAP2K6. Interacts with ZFP36; this interaction enhances the association with SH3KBP1/CIN85. Interacts with SH3KBP1; this interaction enhances the association with ZFP36. The cofactor is Mg(2+). As to expression, widely expressed. High expression was found in skeletal muscle, kidney, testis followed by heart brain and lung. Low expression was found in spleen.

It localises to the cytoplasm. The protein localises to the perinuclear region. It catalyses the reaction L-seryl-[protein] + ATP = O-phospho-L-seryl-[protein] + ADP + H(+). The catalysed reaction is L-threonyl-[protein] + ATP = O-phospho-L-threonyl-[protein] + ADP + H(+). Its activity is regulated as follows. N-terminal autoinhibitory domain interacts with the C-terminal kinase domain, inhibiting kinase activity, and preventing interaction with its substrate, MAP2K6. The GADD45 proteins activate the kinase by binding to the N-terminal domain. Activated by phosphorylation on Thr-1494. Component of a protein kinase signal transduction cascade. Activates the CSBP2, P38 and JNK MAPK pathways, but not the ERK pathway. Specifically phosphorylates and activates MAP2K4 and MAP2K6. The protein is Mitogen-activated protein kinase kinase kinase 4 (Map3k4) of Mus musculus (Mouse).